The chain runs to 165 residues: ATP synthase subunit b (165 aa).

The helical transmembrane segment at glycine 7–valine 27 threads the bilayer.

The protein belongs to the ATPase B chain family. In terms of assembly, F-type ATPases have 2 components, F(1) - the catalytic core - and F(0) - the membrane proton channel. F(1) has five subunits: alpha(3), beta(3), gamma(1), delta(1), epsilon(1). F(0) has three main subunits: a(1), b(2) and c(10-14). The alpha and beta chains form an alternating ring which encloses part of the gamma chain. F(1) is attached to F(0) by a central stalk formed by the gamma and epsilon chains, while a peripheral stalk is formed by the delta and b chains.

It is found in the cell membrane. Functionally, f(1)F(0) ATP synthase produces ATP from ADP in the presence of a proton or sodium gradient. F-type ATPases consist of two structural domains, F(1) containing the extramembraneous catalytic core and F(0) containing the membrane proton channel, linked together by a central stalk and a peripheral stalk. During catalysis, ATP synthesis in the catalytic domain of F(1) is coupled via a rotary mechanism of the central stalk subunits to proton translocation. Its function is as follows. Component of the F(0) channel, it forms part of the peripheral stalk, linking F(1) to F(0). In Streptococcus mutans serotype c (strain ATCC 700610 / UA159), this protein is ATP synthase subunit b.